Here is a 329-residue protein sequence, read N- to C-terminus: MSQLPGLSRETRESIAMYHLRVPQTEEELERYYQFRWEMLRKPLHQPKGSERDAWDAMAHHQMVVDEQGNLVAVGRLYINADNEASIRFMAVHPDVQDKGLGTLMAMTLESVARQEGVKRVTCSAREDAVEFFAKLGFVNQGEITTPTTTPIRHFLMIKPVATLDDILHRGDWCAQLQQAWYEHIPLSEKMGVRIQQYTGQKFITTMPETGNQNPHHTLFAGSLFSLATLTGWGLIWLMLRERHLGGTIILADAHIRYSKPISGKPHAVADLGALSGDLDRLARGRKARVQMQVEIFGDETPGAVFEGTYIVLPAKPFGPYEEGGNEEE.

Positions 18–162 (YHLRVPQTEE…RHFLMIKPVA (145 aa)) constitute an N-acetyltransferase domain.

It belongs to the acetyltransferase family. FabY subfamily.

Its pathway is lipid metabolism; fatty acid biosynthesis. Functionally, supports initiation of fatty acid biosynthesis in the absence of FabH. The polypeptide is Probable acyltransferase FabY (Escherichia coli O157:H7).